The following is a 631-amino-acid chain: 1-deoxy-D-xylulose-5-phosphate synthase (631 aa).

Residues His87 and 128 to 130 each bind thiamine diphosphate; that span reads GHS. Asp159 serves as a coordination point for Mg(2+). Thiamine diphosphate is bound by residues 160-161, Asn188, Phe295, and Glu378; that span reads GA. A Mg(2+)-binding site is contributed by Asn188.

Belongs to the transketolase family. DXPS subfamily. As to quaternary structure, homodimer. Mg(2+) serves as cofactor. Requires thiamine diphosphate as cofactor.

It carries out the reaction D-glyceraldehyde 3-phosphate + pyruvate + H(+) = 1-deoxy-D-xylulose 5-phosphate + CO2. It participates in metabolic intermediate biosynthesis; 1-deoxy-D-xylulose 5-phosphate biosynthesis; 1-deoxy-D-xylulose 5-phosphate from D-glyceraldehyde 3-phosphate and pyruvate: step 1/1. In terms of biological role, catalyzes the acyloin condensation reaction between C atoms 2 and 3 of pyruvate and glyceraldehyde 3-phosphate to yield 1-deoxy-D-xylulose-5-phosphate (DXP). This chain is 1-deoxy-D-xylulose-5-phosphate synthase, found in Pseudomonas syringae pv. tomato (strain ATCC BAA-871 / DC3000).